The primary structure comprises 324 residues: Serine carboxypeptidase II-1 (324 aa).

Asparagine 10 carries N-linked (GlcNAc...) asparagine glycosylation. Residue serine 41 is part of the active site. Cystine bridges form between cysteine 109/cysteine 121 and cysteine 145/cysteine 170. Residues 150–162 (LHRRRLIKGRRPW) constitute a propeptide, linker peptide. N-linked (GlcNAc...) asparagine glycosylation is present at asparagine 191. Residues aspartate 239 and histidine 291 contribute to the active site.

The protein belongs to the peptidase S10 family. As to quaternary structure, carboxypeptidase II is a dimer, where each monomer is composed of two chains linked by a disulfide bond. The linker peptide is endoproteolytically excised during enzyme maturation.

The catalysed reaction is Preferential release of a C-terminal arginine or lysine residue.. The protein is Serine carboxypeptidase II-1 (CXP;2-1) of Hordeum vulgare (Barley).